The sequence spans 370 residues: Anthranilate phosphoribosyltransferase (370 aa).

A disordered region spans residues 1–27 (MALSAEGSSGGSRGGSPKAEAASVPSW). Residues Gly-107, 110-111 (GD), Thr-115, 117-120 (NLST), 135-143 (KHGNRAASS), and Gly-147 each bind 5-phospho-alpha-D-ribose 1-diphosphate. Anthranilate is bound at residue Gly-107. Position 119 (Ser-119) interacts with Mg(2+). An anthranilate-binding site is contributed by Asn-138. An anthranilate-binding site is contributed by Arg-193. Mg(2+)-binding residues include Asp-251 and Glu-252.

This sequence belongs to the anthranilate phosphoribosyltransferase family. As to quaternary structure, homodimer. Requires Mg(2+) as cofactor.

The enzyme catalyses N-(5-phospho-beta-D-ribosyl)anthranilate + diphosphate = 5-phospho-alpha-D-ribose 1-diphosphate + anthranilate. It functions in the pathway amino-acid biosynthesis; L-tryptophan biosynthesis; L-tryptophan from chorismate: step 2/5. Functionally, catalyzes the transfer of the phosphoribosyl group of 5-phosphorylribose-1-pyrophosphate (PRPP) to anthranilate to yield N-(5'-phosphoribosyl)-anthranilate (PRA). The polypeptide is Anthranilate phosphoribosyltransferase (Mycobacterium bovis (strain ATCC BAA-935 / AF2122/97)).